The sequence spans 891 residues: Alanine--tRNA ligase (891 aa).

Zn(2+)-binding residues include H564, H568, C681, and H685.

The protein belongs to the class-II aminoacyl-tRNA synthetase family. Zn(2+) serves as cofactor.

Its subcellular location is the cytoplasm. The catalysed reaction is tRNA(Ala) + L-alanine + ATP = L-alanyl-tRNA(Ala) + AMP + diphosphate. Its function is as follows. Catalyzes the attachment of alanine to tRNA(Ala) in a two-step reaction: alanine is first activated by ATP to form Ala-AMP and then transferred to the acceptor end of tRNA(Ala). Also edits incorrectly charged Ser-tRNA(Ala) and Gly-tRNA(Ala) via its editing domain. This chain is Alanine--tRNA ligase, found in Methylorubrum populi (strain ATCC BAA-705 / NCIMB 13946 / BJ001) (Methylobacterium populi).